A 1302-amino-acid chain; its full sequence is Phosphoribosylformylglycinamidine synthase (1302 aa).

ATP is bound by residues 307–318 and Ala678; that span reads GASTGSGGEIRD. 3 residues coordinate Mg(2+): Glu718, Asn722, and Asp891. The Glutamine amidotransferase type-1 domain maps to 1049–1302; sequence MAILREQGVN…MFQNARKNIG (254 aa). Cys1142 serves as the catalytic Nucleophile. Active-site residues include His1267 and Glu1269.

This sequence in the N-terminal section; belongs to the FGAMS family. In terms of assembly, monomer.

It is found in the cytoplasm. It catalyses the reaction N(2)-formyl-N(1)-(5-phospho-beta-D-ribosyl)glycinamide + L-glutamine + ATP + H2O = 2-formamido-N(1)-(5-O-phospho-beta-D-ribosyl)acetamidine + L-glutamate + ADP + phosphate + H(+). Its pathway is purine metabolism; IMP biosynthesis via de novo pathway; 5-amino-1-(5-phospho-D-ribosyl)imidazole from N(2)-formyl-N(1)-(5-phospho-D-ribosyl)glycinamide: step 1/2. Its function is as follows. Phosphoribosylformylglycinamidine synthase involved in the purines biosynthetic pathway. Catalyzes the ATP-dependent conversion of formylglycinamide ribonucleotide (FGAR) and glutamine to yield formylglycinamidine ribonucleotide (FGAM) and glutamate. In Vibrio parahaemolyticus serotype O3:K6 (strain RIMD 2210633), this protein is Phosphoribosylformylglycinamidine synthase.